The following is a 109-amino-acid chain: MFGKGGIGNLMKQAQQMQEKMQQMQEEVANLEVTGESGAGLVKITINGAHNCRRVEIDPSLMEDDKEMLEDLIAAAFNDAARRIAETQKEKMATVSSGMQLPPGFKMPF.

Belongs to the YbaB/EbfC family. Homodimer.

The protein localises to the cytoplasm. Its subcellular location is the nucleoid. Binds to DNA and alters its conformation. May be involved in regulation of gene expression, nucleoid organization and DNA protection. In Pectobacterium atrosepticum (strain SCRI 1043 / ATCC BAA-672) (Erwinia carotovora subsp. atroseptica), this protein is Nucleoid-associated protein ECA1177.